A 393-amino-acid chain; its full sequence is 4-hydroxyphenylpyruvate dioxygenase (393 aa).

VOC domains are found at residues 17 to 148 (AFDH…LLER) and 179 to 339 (FLDH…IFSK). Positions 182, 267, and 350 each coordinate Fe cation.

It belongs to the 4HPPD family. The cofactor is Fe cation. In terms of tissue distribution, expressed in the hypodermis and intestine.

It carries out the reaction 3-(4-hydroxyphenyl)pyruvate + O2 = homogentisate + CO2. The protein operates within amino-acid degradation; L-phenylalanine degradation; acetoacetate and fumarate from L-phenylalanine: step 3/6. Key enzyme in the degradation of tyrosine. The protein is 4-hydroxyphenylpyruvate dioxygenase of Caenorhabditis elegans.